A 333-amino-acid chain; its full sequence is Adenosine deaminase (333 aa).

H12 and H14 together coordinate Zn(2+). Residues H14, D16, and G170 each coordinate substrate. H197 serves as a coordination point for Zn(2+). E200 functions as the Proton donor in the catalytic mechanism. Zn(2+) is bound at residue D278. Residue D279 participates in substrate binding.

This sequence belongs to the metallo-dependent hydrolases superfamily. Adenosine and AMP deaminases family. Adenosine deaminase subfamily. Zn(2+) serves as cofactor.

The enzyme catalyses adenosine + H2O + H(+) = inosine + NH4(+). It catalyses the reaction 2'-deoxyadenosine + H2O + H(+) = 2'-deoxyinosine + NH4(+). Catalyzes the hydrolytic deamination of adenosine and 2-deoxyadenosine. This is Adenosine deaminase from Shigella dysenteriae serotype 1 (strain Sd197).